The primary structure comprises 377 residues: Probable pectin lyase D (377 aa).

An N-terminal signal peptide occupies residues 1-17 (MRVSAFALLAAAATAAA). Cystine bridges form between cysteine 80–cysteine 99 and cysteine 89–cysteine 223. N-linked (GlcNAc...) asparagine glycosylation occurs at asparagine 126. Arginine 253 is a catalytic residue. Cysteine 321 and cysteine 329 are disulfide-bonded.

The protein belongs to the polysaccharide lyase 1 family.

It is found in the secreted. It catalyses the reaction Eliminative cleavage of (1-&gt;4)-alpha-D-galacturonan methyl ester to give oligosaccharides with 4-deoxy-6-O-methyl-alpha-D-galact-4-enuronosyl groups at their non-reducing ends.. In terms of biological role, pectinolytic enzymes consist of four classes of enzymes: pectin lyase, polygalacturonase, pectin methylesterase and rhamnogalacturonase. Among pectinolytic enzymes, pectin lyase is the most important in depolymerization of pectin, since it cleaves internal glycosidic bonds of highly methylated pectins. The polypeptide is Probable pectin lyase D (pelD) (Emericella nidulans (strain FGSC A4 / ATCC 38163 / CBS 112.46 / NRRL 194 / M139) (Aspergillus nidulans)).